The sequence spans 194 residues: Protein GrpE (194 aa).

Positions 1–14 are enriched in basic and acidic residues; sequence MSKMNPNEKKENAS. The disordered stretch occupies residues 1–48; that stretch reads MSKMNPNEKKENASKNENVNNEEATNLQEEQSNAADEAAGSDNVSGEV. The span at 24–34 shows a compositional bias: polar residues; it reads ATNLQEEQSNA.

The protein belongs to the GrpE family. Homodimer.

It localises to the cytoplasm. Functionally, participates actively in the response to hyperosmotic and heat shock by preventing the aggregation of stress-denatured proteins, in association with DnaK and GrpE. It is the nucleotide exchange factor for DnaK and may function as a thermosensor. Unfolded proteins bind initially to DnaJ; upon interaction with the DnaJ-bound protein, DnaK hydrolyzes its bound ATP, resulting in the formation of a stable complex. GrpE releases ADP from DnaK; ATP binding to DnaK triggers the release of the substrate protein, thus completing the reaction cycle. Several rounds of ATP-dependent interactions between DnaJ, DnaK and GrpE are required for fully efficient folding. The sequence is that of Protein GrpE from Parabacteroides distasonis (strain ATCC 8503 / DSM 20701 / CIP 104284 / JCM 5825 / NCTC 11152).